Here is a 104-residue protein sequence, read N- to C-terminus: Large ribosomal subunit protein bL21 (104 aa).

This sequence belongs to the bacterial ribosomal protein bL21 family. In terms of assembly, part of the 50S ribosomal subunit. Contacts protein L20.

This protein binds to 23S rRNA in the presence of protein L20. The polypeptide is Large ribosomal subunit protein bL21 (Gluconacetobacter diazotrophicus (strain ATCC 49037 / DSM 5601 / CCUG 37298 / CIP 103539 / LMG 7603 / PAl5)).